A 503-amino-acid polypeptide reads, in one-letter code: CDK5 regulatory subunit-associated protein 3 (503 aa).

3 short sequence motifs (shuffled ATG8-binding motif) span residues 266 to 269 (IDWG), 288 to 291 (IDWG), and 306 to 309 (IDWG). The interval 268 to 503 (WGDFGVEAVS…RPVNLMGTSL (236 aa)) is required for interaction with UFL1 and mediates interaction with CHEK1. The interval 352–367 (DELMELEIFLSQRAVE) is RPL10a-binding domain (RBD). K447 participates in a covalent cross-link: Glycyl lysine isopeptide (Lys-Gly) (interchain with G-Cter in SUMO2).

This sequence belongs to the CDK5RAP3 family. In terms of assembly, substrate adapter component of the UFM1 ribosome E3 ligase (UREL) complex, composed of UFL1, DDRGK1 and CDK5RAP3. Interaction with UFL1 anchors CDK5RAP3 in the cytoplasm, preventing its translocation to the nucleus which allows expression of the CCND1 cyclin and progression of cells through the G1/S transition. Interacts with ATG8 family proteins MAP1LC3A, MAP1LC3B, GABARAP, GABARAPL1 and GABARAPL2. Interacts with CDK5R1; competes with CDK5RAP1 and CDK5RAP2. Interacts with RELA. Interacts with CHEK1; may negatively regulate CHEK1 and thereby stimulate entry into mitosis. Interacts with CDKN2A/ARF and MDM2; forms a ternary complex involved in regulation of p53/TP53. Interacts with MAPK14. Interacts with CCNB1. Interacts with TUBG1; may regulate CDK5RAP3 in mitotic G2/M transition checkpoint. May be phosphorylated by CDK5. In terms of processing, ubiquitinated. Probably triggers proteasomal degradation and is negatively regulated by UFL1. Post-translationally, may be ufmylated. Cleaved by caspases early during apoptosis, the resulting peptides may play a role in rupture of the nuclear envelope. As to expression, widely expressed with higher expression in secretory tissues.

The protein resides in the endoplasmic reticulum membrane. It is found in the cytoplasm. The protein localises to the nucleus. Its subcellular location is the cytoskeleton. It localises to the microtubule organizing center. The protein resides in the centrosome. In terms of biological role, substrate adapter of E3 ligase complexes mediating ufmylation, the covalent attachment of the ubiquitin-like modifier UFM1 to substrate proteins, and which is involved in various processes, such as ribosome recycling and reticulophagy (also called ER-phagy). As part of the UREL complex, plays a key role in ribosome recycling by promoting mono-ufmylation of RPL26/uL24 subunit of the 60S ribosome. Ufmylation of RPL26/uL24 occurs on free 60S ribosomes following ribosome dissociation: it weakens the junction between post-termination 60S subunits and SEC61 translocons, promoting release and recycling of the large ribosomal subunit from the endoplasmic reticulum membrane. Ufmylation of RPL26/uL24 and subsequent 60S ribosome recycling either take place after normal termination of translation or after ribosome stalling during cotranslational translocation at the endoplasmic reticulum. Within the UREL complex, CDK5RAP3 acts as a substrate adapter that constrains UFL1 ligase activity to mono-ufmylate RPL26/uL24 at 'Lys-134'. The UREL complex is also involved in reticulophagy in response to endoplasmic reticulum stress by promoting ufmylation of proteins such as CYB5R3, thereby promoting lysosomal degradation of ufmylated proteins. Also acts as a regulator of transcription: negatively regulates NF-kappa-B-mediated gene transcription through the control of RELA phosphorylation. Also regulates mitotic G2/M transition checkpoint and mitotic G2 DNA damage checkpoint. Through its interaction with CDKN2A/ARF and MDM2 may induce MDM2-dependent p53/TP53 ubiquitination, stabilization and activation in the nucleus, thereby promoting G1 cell cycle arrest and inhibition of cell proliferation. May also play a role in the rupture of the nuclear envelope during apoptosis. May regulate MAPK14 activity by regulating its dephosphorylation by PPM1D/WIP1. Required for liver development. This is CDK5 regulatory subunit-associated protein 3 from Mus musculus (Mouse).